We begin with the raw amino-acid sequence, 183 residues long: Oligoribonuclease (183 aa).

An Exonuclease domain is found at 8 to 171; the sequence is LIWLDMEMTG…ADIRESIAEL (164 aa). Tyrosine 129 is an active-site residue.

The protein belongs to the oligoribonuclease family.

It is found in the cytoplasm. In terms of biological role, 3'-to-5' exoribonuclease specific for small oligoribonucleotides. This Aromatoleum aromaticum (strain DSM 19018 / LMG 30748 / EbN1) (Azoarcus sp. (strain EbN1)) protein is Oligoribonuclease.